The sequence spans 105 residues: Heat shock protein HspQ (105 aa).

The tract at residues 80–105 is disordered; it reads AHPEQPSLDELAASIRHQLQAPHLRN.

Belongs to the HspQ family.

The protein localises to the cytoplasm. Involved in the degradation of certain denaturated proteins, including DnaA, during heat shock stress. The protein is Heat shock protein HspQ of Yersinia pseudotuberculosis serotype O:1b (strain IP 31758).